Reading from the N-terminus, the 493-residue chain is Glutamyl-tRNA(Gln) amidotransferase subunit A (493 aa).

Catalysis depends on charge relay system residues Lys-78 and Ser-158. Ser-182 (acyl-ester intermediate) is an active-site residue.

This sequence belongs to the amidase family. GatA subfamily. Heterotrimer of A, B and C subunits.

The catalysed reaction is L-glutamyl-tRNA(Gln) + L-glutamine + ATP + H2O = L-glutaminyl-tRNA(Gln) + L-glutamate + ADP + phosphate + H(+). In terms of biological role, allows the formation of correctly charged Gln-tRNA(Gln) through the transamidation of misacylated Glu-tRNA(Gln) in organisms which lack glutaminyl-tRNA synthetase. The reaction takes place in the presence of glutamine and ATP through an activated gamma-phospho-Glu-tRNA(Gln). This chain is Glutamyl-tRNA(Gln) amidotransferase subunit A, found in Rickettsia bellii (strain RML369-C).